The primary structure comprises 278 residues: Sulfur carrier protein FdhD (278 aa).

Catalysis depends on Cys121, which acts as the Cysteine persulfide intermediate. A Mo-bis(molybdopterin guanine dinucleotide)-binding site is contributed by 260-265 (FCKPGR).

It belongs to the FdhD family.

It localises to the cytoplasm. Its function is as follows. Required for formate dehydrogenase (FDH) activity. Acts as a sulfur carrier protein that transfers sulfur from IscS to the molybdenum cofactor prior to its insertion into FDH. The protein is Sulfur carrier protein FdhD of Salmonella agona (strain SL483).